Here is a 630-residue protein sequence, read N- to C-terminus: MDVTKIKNPRFLKNMSTKQLIELSADIRKFLIEKLSKTGGHIGPNLGVVELTIALHKVFDSPKDKLIWDVGHQSYVHKILTGRASEFDTLRQYKGLSGFPKRSESEHDVWETGHSSTSLSAAMGMAIARDLKGTDEYIVPIIGDGALTGGMALEALNHIGHEKKDIIVVLNDNEMSIAPNVGALHNVLGRLRTAGKYQWVKDELEFLLKRIPAVGGKLAATAERIKDSLKYLLVSGVFFEELGFTYLGPVDGHNFDDLFENLHYAKKIKGPVLLHVITKKGKGYSPAENDKVGTWHGTGPYKIETGDFLKPVDTAPSWSELVSETVRKLARTDKRIVAITPAMPVGSKLEGFASEFPDRMFDVGIAEQHATTLAAGLATQGMKPFLAIYSTFLQRAYDQVVHDVCRQNLNVFFAIDRAGLVGADGETHQGVFDIAFLRHVPNLVIMMPKDENEGQHMVYTAIQYDDGPIALRFPRGNGLGVKLDEELKKIPIGTWEVLREGRDLAILTFGTTISMALEAAEKLAKDNISVKVVNARFIKPMDEKILHDLLESNIPILTIEEAVLQGGFGSAVLEFAHDHGYHQAVINRMGIPDRFIEHGSVKELLNEIGLTTAHIIDRVKTIIPRKQKRA.

Residues His72 and 113-115 each bind thiamine diphosphate; that span reads GHS. Asp144 lines the Mg(2+) pocket. Residues 145–146, Asn173, Tyr284, and Glu367 each bind thiamine diphosphate; that span reads GA. Asn173 contributes to the Mg(2+) binding site.

This sequence belongs to the transketolase family. DXPS subfamily. In terms of assembly, homodimer. Mg(2+) is required as a cofactor. Thiamine diphosphate serves as cofactor.

It catalyses the reaction D-glyceraldehyde 3-phosphate + pyruvate + H(+) = 1-deoxy-D-xylulose 5-phosphate + CO2. The protein operates within metabolic intermediate biosynthesis; 1-deoxy-D-xylulose 5-phosphate biosynthesis; 1-deoxy-D-xylulose 5-phosphate from D-glyceraldehyde 3-phosphate and pyruvate: step 1/1. Catalyzes the acyloin condensation reaction between C atoms 2 and 3 of pyruvate and glyceraldehyde 3-phosphate to yield 1-deoxy-D-xylulose-5-phosphate (DXP). This is 1-deoxy-D-xylulose-5-phosphate synthase from Geobacillus sp. (strain WCH70).